Consider the following 505-residue polypeptide: ATP synthase subunit alpha, chloroplastic (505 aa).

Residue Gly-170–Thr-177 participates in ATP binding.

The protein belongs to the ATPase alpha/beta chains family. F-type ATPases have 2 components, CF(1) - the catalytic core - and CF(0) - the membrane proton channel. CF(1) has five subunits: alpha(3), beta(3), gamma(1), delta(1), epsilon(1). CF(0) has four main subunits: a, b, b' and c.

The protein resides in the plastid. It is found in the chloroplast thylakoid membrane. The catalysed reaction is ATP + H2O + 4 H(+)(in) = ADP + phosphate + 5 H(+)(out). Produces ATP from ADP in the presence of a proton gradient across the membrane. The alpha chain is a regulatory subunit. The chain is ATP synthase subunit alpha, chloroplastic from Phaeodactylum tricornutum (strain CCAP 1055/1).